The following is a 798-amino-acid chain: Phenylalanine--tRNA ligase beta subunit (798 aa).

A tRNA-binding domain is found at 39–148; it reads NPIFDGFLVG…EDIPIGKKIN (110 aa). One can recognise a B5 domain in the interval 402–477; the sequence is SCSNKIKLYH…RIYNYNNIPL (76 aa). Residues aspartate 455, aspartate 461, and aspartate 465 each contribute to the Mg(2+) site. One can recognise an FDX-ACB domain in the interval 704–797; that stretch reads SKYPTSRRDI…LKKKFQVVLR (94 aa).

It belongs to the phenylalanyl-tRNA synthetase beta subunit family. Type 1 subfamily. As to quaternary structure, tetramer of two alpha and two beta subunits. Mg(2+) is required as a cofactor.

Its subcellular location is the cytoplasm. The catalysed reaction is tRNA(Phe) + L-phenylalanine + ATP = L-phenylalanyl-tRNA(Phe) + AMP + diphosphate + H(+). This Buchnera aphidicola subsp. Schizaphis graminum (strain Sg) protein is Phenylalanine--tRNA ligase beta subunit (pheT).